The primary structure comprises 820 residues: DNA gyrase subunit A (820 aa).

Positions 31–496 (IPDVRDGLKP…TLTNIEIEDL (466 aa)) constitute a Topo IIA-type catalytic domain. The active-site O-(5'-phospho-DNA)-tyrosine intermediate is the Tyr-119. Residues 523-529 (QRRGGKG) carry the GyrA-box motif.

It belongs to the type II topoisomerase GyrA/ParC subunit family. Heterotetramer, composed of two GyrA and two GyrB chains. In the heterotetramer, GyrA contains the active site tyrosine that forms a transient covalent intermediate with DNA, while GyrB binds cofactors and catalyzes ATP hydrolysis.

The protein localises to the cytoplasm. It carries out the reaction ATP-dependent breakage, passage and rejoining of double-stranded DNA.. In terms of biological role, a type II topoisomerase that negatively supercoils closed circular double-stranded (ds) DNA in an ATP-dependent manner to modulate DNA topology and maintain chromosomes in an underwound state. Negative supercoiling favors strand separation, and DNA replication, transcription, recombination and repair, all of which involve strand separation. Also able to catalyze the interconversion of other topological isomers of dsDNA rings, including catenanes and knotted rings. Type II topoisomerases break and join 2 DNA strands simultaneously in an ATP-dependent manner. In Lawsonia intracellularis (strain PHE/MN1-00), this protein is DNA gyrase subunit A.